We begin with the raw amino-acid sequence, 128 residues long: Small ribosomal subunit protein uS11 (128 aa).

Belongs to the universal ribosomal protein uS11 family. Part of the 30S ribosomal subunit. Interacts with proteins S7 and S18. Binds to IF-3.

In terms of biological role, located on the platform of the 30S subunit, it bridges several disparate RNA helices of the 16S rRNA. Forms part of the Shine-Dalgarno cleft in the 70S ribosome. The protein is Small ribosomal subunit protein uS11 of Ligilactobacillus salivarius (strain UCC118) (Lactobacillus salivarius).